The sequence spans 299 residues: Hydrogenase maturation factor HypB (299 aa).

The Ni(2+) site is built by Cys-2, Cys-5, and Cys-7. The tract at residues 18 to 57 is disordered; it reads EVGDDGHGHHHHDGHHDHDHDHDHHRGDHEHDDHHHAEDG. Over residues 31–57 the composition is skewed to basic and acidic residues; that stretch reads GHHDHDHDHDHHRGDHEHDDHHHAEDG. Residues 107–268 form a G-domain region; the sequence is ALNFVSSPGS…LRVNPRLQTL (162 aa). Ni(2+) contacts are provided by Cys-167, His-168, and Cys-199. Zn(2+) contacts are provided by Cys-167, His-168, and Cys-199.

The protein belongs to the SIMIBI class G3E GTPase family. HypB/HupM subfamily.

In terms of biological role, involved in the maturation of [NiFe] hydrogenases. Required for nickel insertion into the metal center of the hydrogenase. Exhibits a low intrinsic GTPase activity, which is essential for nickel insertion. Is able to bind 4 nickel ions per subunit. Can also bind zinc. The protein is Hydrogenase maturation factor HypB of Rhizobium leguminosarum bv. viciae.